We begin with the raw amino-acid sequence, 183 residues long: Caltractin ICL1c (183 aa).

The disordered stretch occupies residues 1–30; it reads MARRGQQPPPQQQQAPPTQKNQAGKFNPAE. EF-hand domains lie at 39 to 74, 75 to 110, 112 to 147, and 148 to 183; these read EEVL…LGFE, AKNQ…RISE, DSKA…LGET, and MDDS…KTFA. 10 residues coordinate Ca(2+): Asp52, Asp54, Thr56, Ser58, Glu63, Asp88, Asp90, Ser92, Gln94, and Glu99.

Belongs to the centrin family. In terms of assembly, monomer.

The protein resides in the cytoplasm. The protein localises to the cytoskeleton. In terms of biological role, plays a fundamental role in microtubule organizing center structure and function. Component of the infraciliary lattice (ICL) and the ciliary basal bodies. The polypeptide is Caltractin ICL1c (Icl1c) (Paramecium tetraurelia).